The chain runs to 435 residues: Acetyltransferase atnC (435 aa).

Transmembrane regions (helical) follow at residues 10-30 (AFAN…FLII), 40-60 (YFGI…APTL), and 68-88 (SFLA…LLIL). N203 carries an N-linked (GlcNAc...) asparagine glycan. A run of 3 helical transmembrane segments spans residues 306–326 (FLVF…MGLS), 333–353 (IPYF…QAFY), and 370–390 (VVGF…YMFP). A glycan (N-linked (GlcNAc...) asparagine) is linked at N406. A helical membrane pass occupies residues 407–427 (LTEVIGMPMMWGLLGTFGMLV).

It belongs to the wax synthase family.

It localises to the membrane. It functions in the pathway secondary metabolite biosynthesis; terpenoid biosynthesis. Its function is as follows. Acetyltransferase; part of the gene cluster that mediates the biosynthesis of the meroterpenoids arthripenoids. The pathway begins with the HR-PKS atnH that catalyzes two chain-extension steps to form a reduced triketide, which then primes the SAT domain in the NR-PKS atnG to initiate three more cycles of extension to give a linear hexaketide corresponding to the polyketide part of arthripenoids. The FAD-dependent monooxygenase atnJ then performs an oxidative decarboxylation at C11 of the atnH/atnG product, via an electrophilic aromatic hydroxylation with concomitant ipso-decarboxylation. The membrane-bound polyprenyl transferase atnF then introduces a farnesyl group before the FAD-dependent monooxygenase atnK functions as the first epoxidase on terminal C12'-C13' olefin, followed by a second epoxidation on C7'-C8' catalyzed by atnA. The terpene cyclase/mutase atnI then initiates the sequential tricyclic ring formation through protonation of the terminal epoxide and catalyzes the regioselective and stereoselective 6/6/6-tricyclic ring formation. The cytochrome P450 monooxygenase atnM is responsible for hydroxylating both C1' and C10'. The next steps may involve ketoreduction and acetyl transfer by the ketoreductase atnB and the acetyltransferase atnC, and lead to the production of arthripenoid B, the final biosynthetic product of the atn cluster. The hydroquinone moiety in arthripenoid B is prone to undergo spontaneous oxidation to afford a benzoquinone compound, a key intermediate for generating structure diversity. For instance, addition of a cysteine followed by ring contraction gives arthripenoid A, tautomerization gives the main product arthripenoid C, addition of a molecular of water or amine affords arthripenoid D or E, respectively, and loss of one water forms arthripenoid F. The chain is Acetyltransferase atnC from Arthrinium sp.